The following is a 203-amino-acid chain: Small ribosomal subunit protein uS2 (203 aa).

This sequence belongs to the universal ribosomal protein uS2 family.

The protein is Small ribosomal subunit protein uS2 of Methanoregula boonei (strain DSM 21154 / JCM 14090 / 6A8).